A 329-amino-acid chain; its full sequence is Ig gamma-2C chain C region (329 aa).

The interval 1 to 97 (ARTTAPSVYP…ATKSNLIKRI (97 aa)) is CH1. Cys27 and Cys82 are joined by a disulfide. The tract at residues 98-113 (EPRRPKPRPPTDICSC) is hinge. Residues 114–222 (DDNLGRPSVF…PIEKTISKPR (109 aa)) are CH2. Disulfide bonds link Cys143–Cys203 and Cys249–Cys307. A CH3 region spans residues 223 to 329 (GKARTPQVYT…QKNLSRSPGK (107 aa)).

The chain is Ig gamma-2C chain C region from Rattus norvegicus (Rat).